A 103-amino-acid polypeptide reads, in one-letter code: Co-chaperonin GroES (103 aa).

It belongs to the GroES chaperonin family. As to quaternary structure, heptamer of 7 subunits arranged in a ring. Interacts with the chaperonin GroEL.

The protein resides in the cytoplasm. Functionally, together with the chaperonin GroEL, plays an essential role in assisting protein folding. The GroEL-GroES system forms a nano-cage that allows encapsulation of the non-native substrate proteins and provides a physical environment optimized to promote and accelerate protein folding. GroES binds to the apical surface of the GroEL ring, thereby capping the opening of the GroEL channel. This Gloeothece citriformis (strain PCC 7424) (Cyanothece sp. (strain PCC 7424)) protein is Co-chaperonin GroES.